Here is a 199-residue protein sequence, read N- to C-terminus: Protein p2 (199 aa).

The protein localises to the host cytoplasm. In Avena sativa (Oat), this protein is Protein p2.